Reading from the N-terminus, the 93-residue chain is Small hydrophobic protein (93 aa).

The next 2 helical transmembrane spans lie at 5-25 (LIII…VLAY) and 32-52 (AFGP…IYFP).

The protein localises to the membrane. This is Small hydrophobic protein from Tupaia virus (isolate Tupaia/Thailand/-/1986) (TUPV).